The sequence spans 179 residues: ATP synthase subunit delta (179 aa).

The protein belongs to the ATPase delta chain family. F-type ATPases have 2 components, F(1) - the catalytic core - and F(0) - the membrane proton channel. F(1) has five subunits: alpha(3), beta(3), gamma(1), delta(1), epsilon(1). F(0) has three main subunits: a(1), b(2) and c(10-14). The alpha and beta chains form an alternating ring which encloses part of the gamma chain. F(1) is attached to F(0) by a central stalk formed by the gamma and epsilon chains, while a peripheral stalk is formed by the delta and b chains.

The protein localises to the cell inner membrane. In terms of biological role, f(1)F(0) ATP synthase produces ATP from ADP in the presence of a proton or sodium gradient. F-type ATPases consist of two structural domains, F(1) containing the extramembraneous catalytic core and F(0) containing the membrane proton channel, linked together by a central stalk and a peripheral stalk. During catalysis, ATP synthesis in the catalytic domain of F(1) is coupled via a rotary mechanism of the central stalk subunits to proton translocation. This protein is part of the stalk that links CF(0) to CF(1). It either transmits conformational changes from CF(0) to CF(1) or is implicated in proton conduction. The protein is ATP synthase subunit delta of Paraburkholderia xenovorans (strain LB400).